A 47-amino-acid chain; its full sequence is Delta-ctenitoxin-Pr2d (47 aa).

5 disulfide bridges follow: Cys3-Cys17, Cys10-Cys23, Cys14-Cys46, Cys16-Cys31, and Cys25-Cys29.

In terms of tissue distribution, expressed by the venom gland.

Its subcellular location is the secreted. Its function is as follows. Blocks voltage-gated sodium channels (Nav). Causes rapid general spastic paralysis and death when injected in mice at dose levels of less than 2 ug per mouse. This Phoneutria reidyi (Brazilian Amazonian armed spider) protein is Delta-ctenitoxin-Pr2d.